The chain runs to 447 residues: UDP-glycosyltransferase 79B9 (447 aa).

UDP-alpha-D-glucose is bound by residues S260, 319–321 (VQQ), 336–344 (HCGFGSMWE), and 358–361 (LCDQ).

Belongs to the UDP-glycosyltransferase family.

This Arabidopsis thaliana (Mouse-ear cress) protein is UDP-glycosyltransferase 79B9 (UGT79B9).